A 157-amino-acid chain; its full sequence is Small ribosomal subunit protein uS7cz/uS7cy (157 aa).

This sequence belongs to the universal ribosomal protein uS7 family. As to quaternary structure, part of the 30S ribosomal subunit.

It localises to the plastid. It is found in the chloroplast. Its function is as follows. One of the primary rRNA binding proteins, it binds directly to 16S rRNA where it nucleates assembly of the head domain of the 30S subunit. The chain is Small ribosomal subunit protein uS7cz/uS7cy (rps7-A) from Welwitschia mirabilis (Tree tumbo).